Here is a 190-residue protein sequence, read N- to C-terminus: Putative manganese efflux pump MntP (190 aa).

The next 5 membrane-spanning stretches (helical) occupy residues 37–57 (LILAGIFGVFQALMPVIGWGI), 64–84 (LSFIRAIDHWVAFLLLAGVGA), 111–131 (LILGLATSIDALAVGMGMAFV), 135–155 (IITLALAMGLTTFVLSLVGAW), and 164–184 (FGGWATVIGGLVLIGLGGNIL).

This sequence belongs to the MntP (TC 9.B.29) family.

The protein resides in the cell membrane. Probably functions as a manganese efflux pump. This chain is Putative manganese efflux pump MntP, found in Corynebacterium efficiens (strain DSM 44549 / YS-314 / AJ 12310 / JCM 11189 / NBRC 100395).